A 307-amino-acid polypeptide reads, in one-letter code: Mitochondrial glycine transporter (307 aa).

Solcar repeat units follow at residues 8-87, 115-199, and 221-305; these read PRNS…MRSS, LTMY…SKQL, and TSTT…LVKR. The next 6 helical transmembrane spans lie at 14–39, 62–88, 121–146, 174–197, 225–251, and 280–298; these read LIGGFFGGLTSAVALQPLDLLKTRIQ, GTLPSALRTSIGSALYLSCLNLMRSSL, LLTGAFARGLVGYITMPITVIKVRYE, GFGATCLRDAPYAGLYVLLYEKSK, VNTTSAVLSASLATTVTAPFDTIKTRM, and GLSMRLARKALSAGIAWGI.

The protein belongs to the mitochondrial carrier (TC 2.A.29) family. SLC25A38 subfamily.

The protein resides in the mitochondrion inner membrane. It carries out the reaction glycine(in) = glycine(out). Its function is as follows. Mitochondrial glycine transporter that imports glycine into the mitochondrial matrix. Plays an important role in providing glycine for the first enzymatic step in heme biosynthesis, the condensation of glycine with succinyl-CoA to produce 5-aminolevulinate (ALA) in the mitochondrial matrix. The protein is Mitochondrial glycine transporter of Saccharomyces cerevisiae (strain RM11-1a) (Baker's yeast).